The chain runs to 100 residues: MQFYAIASLFLAGTAFAAPATSPNGYDACPDGGLIGTPQCCSLDLVGVLSGECSSPSKTPNSAKEFQEICAASGQKARCCFLSEVFTLGAFCQKPVGVTA.

An N-terminal signal peptide occupies residues 1–17 (MQFYAIASLFLAGTAFA). Disulfide bonds link Cys29–Cys79, Cys40–Cys70, Cys41–Cys53, and Cys80–Cys92.

It belongs to the cerato-ulmin hydrophobin family.

The protein resides in the secreted. It is found in the cell wall. In terms of biological role, aerial growth, conidiation, and dispersal of filamentous fungi in the environment rely upon a capability of their secreting small amphipathic proteins called hydrophobins (HPBs) with low sequence identity. Class I can self-assemble into an outermost layer of rodlet bundles on aerial cell surfaces, conferring cellular hydrophobicity that supports fungal growth, development and dispersal; whereas Class II form highly ordered films at water-air interfaces through intermolecular interactions but contribute nothing to the rodlet structure. Does not seem to be important for the ability to cause seedling disease. In Gibberella moniliformis (Maize ear and stalk rot fungus), this protein is Class II hydrophobin 4.